The following is a 174-amino-acid chain: MIIVIIMPKNENNPNIKNNNHQSPKKRIALTAGTFDLLHPGHFNTLNFAKKHADELVVVLARDETVKRIKGRRPVIPEEQRKIMIETLKPVDKAILGSLTDKLEPILSVKPDIIVLGPDQTTYQLEELKNQLLERGFKTEIVKVEEYVKCPFHSSYDILKEIIRRWCNKEIELK.

Residues 34 to 35 (TF), 39 to 42 (HPGH), Asp-119, and Tyr-147 contribute to the ATP site.

The protein belongs to the archaeal FAD synthase family. In terms of assembly, homodimer. It depends on a divalent metal cation as a cofactor.

It carries out the reaction FMN + ATP + H(+) = FAD + diphosphate. The protein operates within cofactor biosynthesis; FAD biosynthesis; FAD from FMN: step 1/1. In terms of biological role, catalyzes the transfer of the AMP portion of ATP to flavin mononucleotide (FMN) to produce flavin adenine dinucleotide (FAD) coenzyme. This chain is FAD synthase, found in Methanococcus voltae (strain ATCC BAA-1334 / A3).